Here is a 156-residue protein sequence, read N- to C-terminus: Small ribosomal subunit protein uS7 (156 aa).

It belongs to the universal ribosomal protein uS7 family. Part of the 30S ribosomal subunit. Contacts proteins S9 and S11.

Functionally, one of the primary rRNA binding proteins, it binds directly to 16S rRNA where it nucleates assembly of the head domain of the 30S subunit. Is located at the subunit interface close to the decoding center, probably blocks exit of the E-site tRNA. This is Small ribosomal subunit protein uS7 from Mycolicibacterium gilvum (strain PYR-GCK) (Mycobacterium gilvum (strain PYR-GCK)).